Reading from the N-terminus, the 1181-residue chain is WD repeat-containing protein 35 (1181 aa).

WD repeat units follow at residues 4 to 43, 61 to 100, 105 to 143, 147 to 185, 193 to 241, and 246 to 288; these read YLSK…VLKL, LSMN…VWML, WIEE…IVGS, NRIW…IYDN, MKLS…IMRH, and NPVL…IVQF.

Component of the IFT complex A (IFT-A) complex. IFT-A complex is divided into a core subcomplex composed of IFT122:IFT140:WDR19 which is associated with TULP3 and a peripheral subcomplex composed of IFT43:WDR35:TTC21B. Interacts directy with IFT122, ITF43 and TTC21B. Interacts with IFT43. Interacts with CFAP61.

It localises to the cytoplasm. It is found in the cytoskeleton. The protein resides in the microtubule organizing center. The protein localises to the centrosome. Its subcellular location is the cilium axoneme. It localises to the cilium basal body. Functionally, as a component of the IFT complex A (IFT-A), a complex required for retrograde ciliary transport and entry into cilia of G protein-coupled receptors (GPCRs), it is involved in ciliogenesis and ciliary protein trafficking. May promote CASP3 activation and TNF-stimulated apoptosis. The sequence is that of WD repeat-containing protein 35 from Homo sapiens (Human).